Here is a 164-residue protein sequence, read N- to C-terminus: Protein-export protein SecB (164 aa).

This sequence belongs to the SecB family. In terms of assembly, homotetramer, a dimer of dimers. One homotetramer interacts with 1 SecA dimer.

The protein resides in the cytoplasm. One of the proteins required for the normal export of preproteins out of the cell cytoplasm. It is a molecular chaperone that binds to a subset of precursor proteins, maintaining them in a translocation-competent state. It also specifically binds to its receptor SecA. The chain is Protein-export protein SecB from Shewanella denitrificans (strain OS217 / ATCC BAA-1090 / DSM 15013).